The sequence spans 83 residues: Small ribosomal subunit protein bS20 (83 aa).

The interval 1 to 21 is disordered; it reads MPNIKSAIKRVRTTETAEERN. Positions 12 to 21 are enriched in basic and acidic residues; it reads RTTETAEERN.

Belongs to the bacterial ribosomal protein bS20 family.

Binds directly to 16S ribosomal RNA. In Staphylococcus epidermidis (strain ATCC 35984 / DSM 28319 / BCRC 17069 / CCUG 31568 / BM 3577 / RP62A), this protein is Small ribosomal subunit protein bS20.